The sequence spans 338 residues: DNA-directed RNA polymerase subunit alpha (338 aa).

The alpha N-terminal domain (alpha-NTD) stretch occupies residues 1 to 225; the sequence is MLISQRPTLT…ELFGLARELN (225 aa). The interval 242 to 338 is alpha C-terminal domain (alpha-CTD); the sequence is YIAAYGMPIE…YIDTDPEETE (97 aa). The segment at 314 to 338 is disordered; that stretch reads FDPTQLDGYDAATGDYIDTDPEETE.

The protein belongs to the RNA polymerase alpha chain family. Homodimer. The RNAP catalytic core consists of 2 alpha, 1 beta, 1 beta' and 1 omega subunit. When a sigma factor is associated with the core the holoenzyme is formed, which can initiate transcription.

The catalysed reaction is RNA(n) + a ribonucleoside 5'-triphosphate = RNA(n+1) + diphosphate. Its function is as follows. DNA-dependent RNA polymerase catalyzes the transcription of DNA into RNA using the four ribonucleoside triphosphates as substrates. This is DNA-directed RNA polymerase subunit alpha from Corynebacterium diphtheriae (strain ATCC 700971 / NCTC 13129 / Biotype gravis).